We begin with the raw amino-acid sequence, 72 residues long: Large ribosomal subunit protein bL31 (72 aa).

Zn(2+) contacts are provided by Cys16, Cys18, Cys38, and Cys41.

It belongs to the bacterial ribosomal protein bL31 family. Type A subfamily. Part of the 50S ribosomal subunit. Zn(2+) serves as cofactor.

Binds the 23S rRNA. This chain is Large ribosomal subunit protein bL31, found in Azoarcus sp. (strain BH72).